A 282-amino-acid chain; its full sequence is uncharacterized protein (282 aa).

The protein belongs to the ycf80 family.

The protein resides in the plastid. Its subcellular location is the chloroplast. This is an uncharacterized protein from Guillardia theta (Cryptophyte).